Consider the following 385-residue polypeptide: Glucans biosynthesis protein C (385 aa).

10 helical membrane-spanning segments follow: residues 17-37, 60-80, 91-111, 137-157, 173-193, 212-232, 239-259, 274-294, 311-331, and 338-358; these read AWLM…SHTW, MQVF…RYPL, VGIP…IMLQ, ISHL…VWIF, KFSM…YAVI, FIVM…LAFI, LFTT…VAYL, TESV…FSFG, ASLF…AYIT, and WLGF…LYEI.

This sequence belongs to the acyltransferase 3 family. OpgC subfamily.

Its subcellular location is the cell membrane. It functions in the pathway glycan metabolism; osmoregulated periplasmic glucan (OPG) biosynthesis. Necessary for the succinyl substitution of periplasmic glucans. Could catalyze the transfer of succinyl residues from the cytoplasmic side of the membrane to the nascent glucan backbones on the periplasmic side of the membrane. The chain is Glucans biosynthesis protein C from Escherichia coli O6:K15:H31 (strain 536 / UPEC).